Here is a 271-residue protein sequence, read N- to C-terminus: Ribosomal RNA small subunit methyltransferase A (271 aa).

Residues His11, Leu13, Gly38, Glu58, Asp86, and Asn101 each contribute to the S-adenosyl-L-methionine site.

This sequence belongs to the class I-like SAM-binding methyltransferase superfamily. rRNA adenine N(6)-methyltransferase family. RsmA subfamily.

Its subcellular location is the cytoplasm. The enzyme catalyses adenosine(1518)/adenosine(1519) in 16S rRNA + 4 S-adenosyl-L-methionine = N(6)-dimethyladenosine(1518)/N(6)-dimethyladenosine(1519) in 16S rRNA + 4 S-adenosyl-L-homocysteine + 4 H(+). Specifically dimethylates two adjacent adenosines (A1518 and A1519) in the loop of a conserved hairpin near the 3'-end of 16S rRNA in the 30S particle. May play a critical role in biogenesis of 30S subunits. This chain is Ribosomal RNA small subunit methyltransferase A, found in Helicobacter acinonychis (strain Sheeba).